Here is a 1304-residue protein sequence, read N- to C-terminus: Splicing factor 3B subunit 1 (1304 aa).

2 disordered regions span residues 100–119 (QYDPFAEHRPPKIADREDEY) and 124–148 (RTMIISPERLDPFADGGKTPDPKMN). Basic and acidic residues predominate over residues 104 to 119 (FAEHRPPKIADREDEY). Thr-125 is subject to Phosphothreonine. Ser-129 bears the Phosphoserine mark. Lys-141 carries the N6-acetyllysine modification. Residue Thr-142 is modified to Phosphothreonine. Citrulline is present on Arg-157. Positions 172 to 360 (LAEKAKAGEL…PVLTPGKTPI (189 aa)) are disordered. A Phosphoserine modification is found at Ser-194. Phosphothreonine is present on residues Thr-203, Thr-207, and Thr-211. Residue Lys-214 is modified to N6-acetyllysine; alternate. Lys-214 is covalently cross-linked (Glycyl lysine isopeptide (Lys-Gly) (interchain with G-Cter in SUMO2); alternate). Residues Thr-223 and Thr-227 each carry the phosphothreonine modification. The segment at 223-491 (TPGHTPSLRW…VDESTLSPEE (269 aa)) is interaction with PPP1R8. Ser-229 bears the Phosphoserine mark. The span at 231 to 241 (RWDETPGRAKG) shows a compositional bias: basic and acidic residues. Residues Thr-235, Thr-244, Thr-248, Thr-257, Thr-261, Thr-267, Thr-273, and Thr-278 each carry the phosphothreonine modification. Ser-287 bears the Phosphoserine mark. A compositionally biased stretch (basic and acidic residues) spans 291–304 (NRWDETPKTERDTP). Phosphothreonine occurs at positions 296, 299, 303, and 313. Ser-322 bears the Phosphoserine mark. A phosphothreonine mark is found at Thr-326 and Thr-328. The residue at position 332 (Ser-332) is a Phosphoserine. At Thr-341 the chain carries Phosphothreonine. Polar residues predominate over residues 342–352 (PASQMGGSTPV). Residues Ser-344 and Ser-349 each carry the phosphoserine modification. 2 positions are modified to phosphothreonine: Thr-350 and Thr-354. A Phosphoserine modification is found at Ser-400. Lys-413 is covalently cross-linked (Glycyl lysine isopeptide (Lys-Gly) (interchain with G-Cter in SUMO2); alternate). Lys-413 is covalently cross-linked (Glycyl lysine isopeptide (Lys-Gly) (interchain with G-Cter in SUMO1); alternate). A Phosphothreonine modification is found at Thr-426. A Glycyl lysine isopeptide (Lys-Gly) (interchain with G-Cter in SUMO2) cross-link involves residue Lys-430. Thr-434 carries the post-translational modification Phosphothreonine; by DYRK1A. The residue at position 436 (Thr-436) is a Phosphothreonine. Ser-488 bears the Phosphoserine mark. HEAT repeat units follow at residues 529 to 568 (GPLFNQILPLLMSPTLEDQERHLLVKVIDRILYKLDDLVR), 569 to 603 (PYVHKILVVIEPLLIDEDYYARVEGREIISNLAKA), 604 to 641 (AGLATMISTMRPDIDNMDEYVRNTTARAFAVVASALGI), 643 to 677 (SLLPFLKAVCKSKKSWQARHTGIKIVQQIAILMGC), 680 to 718 (LPHLRSLVEIIEHGLVDEQQKVRTISALAIAALAEAATP), 763 to 801 (NYYTREVMLILIREFQSPDEEMKKIVLKVVKQCCGTDGV), 843 to 881 (KVGAAEIISRIVDDLKDEAEQYRKMVMETIEKIMGNLGA), 1010 to 1048 (TPPIKDLLPRLTPILKNRHEKVQENCIDLVGRIADRGAE), 1052 to 1090 (AREWMRICFELLELLKAHKKAIRRATVNTFGYIAKAIGP), 1122 to 1160 (TCSPFTVLPALMNEYRVPELNVQNGVLKSLSFLFEYIGE), and 1163 to 1201 (KDYIYAVTPLLEDALMDRDLVHRQTASAVVQHMSLGVYG). Residues 547–550 (QERH) are interaction with PHF5A. N6-acetyllysine is present on residues Lys-554 and Lys-562. The tract at residues 1156-1157 (EY) is interaction with PHF5A. The tract at residues 1248 to 1304 (QYCLQGLFHPARKVRDVYWKIYNSIYIGSQDALIAHYPRIYNDDKNTYIRYDLDYIL) is interaction with SF3B3 and SF3B5.

The protein belongs to the SF3B1 family. In terms of assembly, component of the 17S U2 SnRNP complex, a ribonucleoprotein complex that contains small nuclear RNA (snRNA) U2 and a number of specific proteins. Part of the SF3B subcomplex of the 17S U2 SnRNP complex. SF3B associates with the splicing subcomplex SF3A and a 12S RNA unit to form the U2 small nuclear ribonucleoproteins complex (U2 snRNP). Within the SF3B complex, interacts directly (via HEAT domain) with SF3B3, SF3B5, SF3B6 and (via HEAT domain) with PHF5A. The SF3B subcomplex interacts with U2AF2. Identified in the spliceosome C complex. Component of the minor (U12-type spliceosome) spliceosome. Within the minor spliceosome complex, interacts with SCNM1 and CRIPT. Component of the B-WICH complex, at least composed of SMARCA5/SNF2H, BAZ1B/WSTF, SF3B1, DEK, MYO1C, ERCC6, MYBBP1A and DDX21. Phosphorylated form interacts with PPP1R8. Interacts with PQBP1. Interacts with RBM17. Interacts with RBM39. Interacts with SETX. Interacts with RBM15. Interacts with USH1G. Interacts with SDE2. Interacts with U2AF1. Interacts with CACTIN. Interacts with ZRSR1. Interacts with CYREN. Post-translationally, phosphorylated. Phosphorylation occurs concomitantly with the splicing catalytic steps. Phosphorylation on Thr-244, Thr-248 and Thr-313 by cyclin-dependent kinases promotes interaction with PPP1R8 during mitosis. In terms of processing, citrullinated by PADI4. As to expression, ubiquitous.

It is found in the nucleus. It localises to the nucleus speckle. Functionally, component of the 17S U2 SnRNP complex of the spliceosome, a large ribonucleoprotein complex that removes introns from transcribed pre-mRNAs. The 17S U2 SnRNP complex (1) directly participates in early spliceosome assembly and (2) mediates recognition of the intron branch site during pre-mRNA splicing by promoting the selection of the pre-mRNA branch-site adenosine, the nucleophile for the first step of splicing. Within the 17S U2 SnRNP complex, SF3B1 is part of the SF3B subcomplex, which is required for 'A' complex assembly formed by the stable binding of U2 snRNP to the branchpoint sequence in pre-mRNA. Sequence independent binding of SF3A and SF3B subcomplexes upstream of the branch site is essential, it may anchor U2 snRNP to the pre-mRNA. May also be involved in the assembly of the 'E' complex. Also acts as a component of the minor spliceosome, which is involved in the splicing of U12-type introns in pre-mRNAs. Together with other U2 snRNP complex components may also play a role in the selective processing of microRNAs (miRNAs) from the long primary miRNA transcript, pri-miR-17-92. This Mus musculus (Mouse) protein is Splicing factor 3B subunit 1.